The primary structure comprises 759 residues: Protein YdeP (759 aa).

[4Fe-4S] cluster-binding residues include Cys-49 and Cys-52.

The protein belongs to the prokaryotic molybdopterin-containing oxidoreductase family. It depends on [4Fe-4S] cluster as a cofactor. Requires Mo-bis(molybdopterin guanine dinucleotide) as cofactor.

Probably involved in acid resistance. In Escherichia coli (strain K12), this protein is Protein YdeP (ydeP).